A 226-amino-acid chain; its full sequence is Lipoprotein-releasing system ATP-binding protein LolD (226 aa).

An ABC transporter domain is found at 5–226; it reads LKATNINKIY…LLRNGHWENY (222 aa). Position 41–48 (41–48) interacts with ATP; that stretch reads GTSGSGKS.

Belongs to the ABC transporter superfamily. Lipoprotein translocase (TC 3.A.1.125) family. In terms of assembly, the complex is composed of two ATP-binding proteins (LolD) and two transmembrane proteins (LolC and LolE).

Its subcellular location is the cell inner membrane. Functionally, part of the ABC transporter complex LolCDE involved in the translocation of mature outer membrane-directed lipoproteins, from the inner membrane to the periplasmic chaperone, LolA. Responsible for the formation of the LolA-lipoprotein complex in an ATP-dependent manner. The protein is Lipoprotein-releasing system ATP-binding protein LolD of Psychrobacter arcticus (strain DSM 17307 / VKM B-2377 / 273-4).